Consider the following 35-residue polypeptide: Photosystem II reaction center protein T (35 aa).

Residues 3 to 23 form a helical membrane-spanning segment; sequence SVAYILIFTLCIGTIFFAIAF.

The protein belongs to the PsbT family. As to quaternary structure, PSII is composed of 1 copy each of membrane proteins PsbA, PsbB, PsbC, PsbD, PsbE, PsbF, PsbH, PsbI, PsbJ, PsbK, PsbL, PsbM, PsbT, PsbX, PsbY, PsbZ, Psb30/Ycf12, peripheral proteins PsbO, CyanoQ (PsbQ), PsbU, PsbV and a large number of cofactors. It forms dimeric complexes.

Its subcellular location is the cellular thylakoid membrane. In terms of biological role, found at the monomer-monomer interface of the photosystem II (PS II) dimer, plays a role in assembly and dimerization of PSII. PSII is a light-driven water plastoquinone oxidoreductase, using light energy to abstract electrons from H(2)O, generating a proton gradient subsequently used for ATP formation. In Nostoc punctiforme (strain ATCC 29133 / PCC 73102), this protein is Photosystem II reaction center protein T.